A 670-amino-acid chain; its full sequence is DNA ligase (670 aa).

NAD(+) is bound by residues 33 to 37 (DAEYD), 82 to 83 (SL), and glutamate 114. Residue lysine 116 is the N6-AMP-lysine intermediate of the active site. NAD(+) contacts are provided by arginine 137, glutamate 174, lysine 291, and lysine 315. Zn(2+) is bound by residues cysteine 409, cysteine 412, cysteine 427, and cysteine 433. One can recognise a BRCT domain in the interval 593 to 670 (GAELPLEGKT…TEQDLLELIN (78 aa)).

It belongs to the NAD-dependent DNA ligase family. LigA subfamily. It depends on Mg(2+) as a cofactor. Mn(2+) serves as cofactor.

It carries out the reaction NAD(+) + (deoxyribonucleotide)n-3'-hydroxyl + 5'-phospho-(deoxyribonucleotide)m = (deoxyribonucleotide)n+m + AMP + beta-nicotinamide D-nucleotide.. Its function is as follows. DNA ligase that catalyzes the formation of phosphodiester linkages between 5'-phosphoryl and 3'-hydroxyl groups in double-stranded DNA using NAD as a coenzyme and as the energy source for the reaction. It is essential for DNA replication and repair of damaged DNA. This chain is DNA ligase, found in Vibrio parahaemolyticus serotype O3:K6 (strain RIMD 2210633).